Consider the following 86-residue polypeptide: Small ribosomal subunit protein bS20 (86 aa).

The protein belongs to the bacterial ribosomal protein bS20 family.

Binds directly to 16S ribosomal RNA. The sequence is that of Small ribosomal subunit protein bS20 from Mycolicibacterium gilvum (strain PYR-GCK) (Mycobacterium gilvum (strain PYR-GCK)).